The sequence spans 67 residues: Protein AaeX (67 aa).

2 helical membrane-spanning segments follow: residues Leu-3–Leu-23 and Phe-43–Ser-63.

The protein belongs to the AaeX family.

It is found in the cell membrane. This Escherichia coli O1:K1 / APEC protein is Protein AaeX.